A 483-amino-acid chain; its full sequence is Regulatory protein ViaA (483 aa).

It belongs to the ViaA family. As to quaternary structure, homodimer. Interacts with RavA.

It localises to the cytoplasm. Component of the RavA-ViaA chaperone complex, which may act on the membrane to optimize the function of some of the respiratory chains. ViaA stimulates the ATPase activity of RavA. This is Regulatory protein ViaA from Salmonella choleraesuis (strain SC-B67).